A 410-amino-acid polypeptide reads, in one-letter code: Probable intron-encoded endonuclease bI1 (410 aa).

The interval 1-131 (MRLLKTHPIL…VLMMAIAFLG (131 aa)) is COB exon 1 encoded. Helical transmembrane passes span 32 to 52 (FGSLLGVCLIIQILTGVFLAM), 75 to 95 (GWLIRYLHANTASFFFIFVYL), and 112 to 132 (LLWSIGVIILVLMMAIAFLGF). Residues 132-410 (FNGQKYMCFY…KKNYIVKVIK (279 aa)) form a COB intron 1 encoded region. Residues 196–286 (PFSGIYMIVN…LETLKPEYNI (91 aa)) enclose the GIY-YIG domain.

It to endonucleases of group I introns of fungi and phage. Post-translationally, the mature protein may arise from proteolytic cleavage of an in-frame translation of COB exon 1 plus intron 1, containing the bI1 open reading frame.

It is found in the mitochondrion. The protein resides in the membrane. Functionally, mitochondrial DNA endonuclease involved in intron homing. The chain is Probable intron-encoded endonuclease bI1 (bI1) from Mycosarcoma maydis (Corn smut fungus).